A 475-amino-acid chain; its full sequence is Splicing factor U2AF 65 kDa subunit (475 aa).

Residues 1 to 90 (MSDFDEFERQ…RHEKKKKVRK (90 aa)) are disordered. Residue Ser-2 is modified to N-acetylserine. Phosphoserine is present on Ser-2. The tract at residues 2–93 (SDFDEFERQL…KKKKVRKYWD (92 aa)) is required for interaction with PRPF19. Residues 7–22 (FERQLNENKQERDKEN) are compositionally biased toward basic and acidic residues. Lys-15 is modified (5-hydroxylysine; by JMJD6; alternate). Lys-15 participates in a covalent cross-link: Glycyl lysine isopeptide (Lys-Gly) (interchain with G-Cter in SUMO2); alternate. Positions 17 to 47 (ERDKENRHRKRSHSRSRSRDRKRRSRSRDRR) are necessary and sufficient to stimulate pre-mRNAs 3'-end cleavage in a CFIm complex-dependent manner. A compositionally biased stretch (basic residues) spans 23-46 (RHRKRSHSRSRSRDRKRRSRSRDR). The segment covering 47–56 (RNRDQRSASR) has biased composition (basic and acidic residues). Lys-70 participates in a covalent cross-link: Glycyl lysine isopeptide (Lys-Gly) (interchain with G-Cter in SUMO2); alternate. Lys-70 carries the post-translational modification N6-acetyllysine; alternate. The residue at position 79 (Ser-79) is a Phosphoserine. The span at 79–89 (SPRHEKKKKVR) shows a compositional bias: basic residues. 3 RRM domains span residues 149–231 (RRLY…RPHD), 259–337 (HKLF…RASV), and 385–466 (LPEE…YCDP). A 5-hydroxylysine; by JMJD6 modification is found at Lys-276. Ser-294 bears the Phosphoserine mark.

This sequence belongs to the splicing factor SR family. In terms of assembly, interacts with U2AF1L4. Heterodimer with U2AF1. Binds unphosphorylated SF1. Interacts with SCAF11 and SNW1. Interacts with ZRSR2/U2AF1-RS2. Interacts with RBM17. Interacts with PRPF19; the interaction is direct. Interacts with POLR2A (via the C-terminal domain); Interacts with PRPF19; the interaction is direct. Interacts with POLR2A (via the C-terminal domain); recruits PRPF19 and the Prp19 complex to the pre-mRNA. Interacts with KHDC4 (Isoform 2). Interacts with ZRSR2. Interacts with the SF3B complex composed of SF3B1, SF3B2, SF3B3, SF3B4, SF3B5, SF3B6 and PHF5A. Interacts (via N-terminus) with CPSF7 (via C-terminus); this interaction stimulates pre-mRNA 3'-end processing by promoting the recruitment of the CFIm complex to cleavage and polyadenylation signals. Interacts with ARGLU1; interaction may be involved in ARGLU1-mediated modulation of alternative splicing. Post-translationally, lysyl-hydroxylation at Lys-15 and Lys-276 affects the mRNA splicing activity of the protein, leading to regulate some, but not all, alternative splicing events.

It is found in the nucleus. Functionally, plays a role in pre-mRNA splicing and 3'-end processing. By recruiting PRPF19 and the PRP19C/Prp19 complex/NTC/Nineteen complex to the RNA polymerase II C-terminal domain (CTD), and thereby pre-mRNA, may couple transcription to splicing. Required for the export of mRNA out of the nucleus, even if the mRNA is encoded by an intron-less gene. Positively regulates pre-mRNA 3'-end processing by recruiting the CFIm complex to cleavage and polyadenylation signals. This chain is Splicing factor U2AF 65 kDa subunit (U2af2), found in Mus musculus (Mouse).